Reading from the N-terminus, the 539-residue chain is Copine-C (539 aa).

C2 domains lie at 1–120 and 128–251; these read MIPS…KIVA and VTGK…PLIN. Ca(2+) contacts are provided by Leu23, Asp24, Asp30, Asp83, Asp85, and Asp98. The VWFA domain occupies 290-507; it reads SLMTAIDCTG…ALAQETLKEI (218 aa).

It belongs to the copine family. The cofactor is Ca(2+).

The polypeptide is Copine-C (cpnC) (Dictyostelium discoideum (Social amoeba)).